The chain runs to 95 residues: Large ribosomal subunit protein uL23 (95 aa).

It belongs to the universal ribosomal protein uL23 family. In terms of assembly, part of the 50S ribosomal subunit. Contacts protein L29, and trigger factor when it is bound to the ribosome.

One of the early assembly proteins it binds 23S rRNA. One of the proteins that surrounds the polypeptide exit tunnel on the outside of the ribosome. Forms the main docking site for trigger factor binding to the ribosome. The chain is Large ribosomal subunit protein uL23 from Syntrophotalea carbinolica (strain DSM 2380 / NBRC 103641 / GraBd1) (Pelobacter carbinolicus).